Here is an 89-residue protein sequence, read N- to C-terminus: Small ribosomal subunit protein uS17 (89 aa).

The protein belongs to the universal ribosomal protein uS17 family. In terms of assembly, part of the 30S ribosomal subunit.

In terms of biological role, one of the primary rRNA binding proteins, it binds specifically to the 5'-end of 16S ribosomal RNA. This is Small ribosomal subunit protein uS17 from Polaromonas sp. (strain JS666 / ATCC BAA-500).